The primary structure comprises 291 residues: Cytosolic Fe-S cluster assembly factor CFD1 (291 aa).

24-31 (GKGGVGKS) is an ATP binding site. Residues Cys199 and Cys202 each coordinate [4Fe-4S] cluster. A disordered region spans residues 270-291 (ENEEEAKETAEEEKSRAATNGQ). The segment covering 276–285 (KETAEEEKSR) has biased composition (basic and acidic residues).

It belongs to the Mrp/NBP35 ATP-binding proteins family. NUBP2/CFD1 subfamily. Heterotetramer of 2 NBP35 and 2 CFD1 chains. [4Fe-4S] cluster is required as a cofactor.

The protein localises to the cytoplasm. Its function is as follows. Component of the cytosolic iron-sulfur (Fe/S) protein assembly (CIA) machinery. Required for maturation of extramitochondrial Fe-S proteins. The NBP35-CFD1 heterotetramer forms a Fe-S scaffold complex, mediating the de novo assembly of an Fe-S cluster and its transfer to target apoproteins. Required for biogenesis and export of both ribosomal subunits, which may reflect a role in assembly of the Fe/S clusters in RLI1, a protein which performs rRNA processing and ribosome export. In Yarrowia lipolytica (strain CLIB 122 / E 150) (Yeast), this protein is Cytosolic Fe-S cluster assembly factor CFD1.